The sequence spans 433 residues: Tol-Pal system protein TolB (433 aa).

The signal sequence occupies residues 1–26; it reads MNKLRLFRSFFAFLLPFGMATGAAHG.

It belongs to the TolB family. The Tol-Pal system is composed of five core proteins: the inner membrane proteins TolA, TolQ and TolR, the periplasmic protein TolB and the outer membrane protein Pal. They form a network linking the inner and outer membranes and the peptidoglycan layer.

The protein resides in the periplasm. In terms of biological role, part of the Tol-Pal system, which plays a role in outer membrane invagination during cell division and is important for maintaining outer membrane integrity. This is Tol-Pal system protein TolB from Methylobacillus flagellatus (strain ATCC 51484 / DSM 6875 / VKM B-1610 / KT).